An 823-amino-acid polypeptide reads, in one-letter code: Protein ROOT HAIR DEFECTIVE 3 homolog 2 (823 aa).

Residues 1–688 (MEVPISGGGG…EAHRRSNNWL (688 aa)) are Cytoplasmic-facing. The GB1/RHD3-type G domain occupies 45 to 260 (GLSYAVVSIV…IAPGGLAADR (216 aa)). 55–62 (GPQGSGKS) provides a ligand contact to GTP. Positions 226 to 246 (LSSYEEKENLFKEQVGQLRQR) form a coiled coil. The helical transmembrane segment at 689 to 709 (PPAWTVLLLAILGYNEFIFLL) threads the bilayer. Residues 710 to 712 (RNP) are Lumenal-facing. The chain crosses the membrane as a helical span at residues 713–733 (LYLLGLFVAFVVSYAAWLQYD). Residues 734–823 (ITAYFRHGTL…SVGSNSDDES (90 aa)) are Cytoplasmic-facing. The tract at residues 770–823 (NQKSSSHPPRHRPPLHPQSFRNQAQQQSQAQVQYQAPSSLSSSSSVGSNSDDES) is disordered. Residues 786-823 (PQSFRNQAQQQSQAQVQYQAPSSLSSSSSVGSNSDDES) are compositionally biased toward low complexity.

It belongs to the TRAFAC class dynamin-like GTPase superfamily. GB1/RHD3 GTPase family. RHD3 subfamily.

The protein localises to the endoplasmic reticulum membrane. In terms of biological role, probable GTP-binding protein that may be involved in cell development. The chain is Protein ROOT HAIR DEFECTIVE 3 homolog 2 from Oryza sativa subsp. japonica (Rice).